Reading from the N-terminus, the 419-residue chain is Serine--tRNA ligase (419 aa).

The disordered stretch occupies residues 45 to 66 (ADSLRAEQKAASKSVGGASPEE). 226–228 (TSE) contacts L-serine. Residues 257 to 259 (RRE) and Val273 contribute to the ATP site. L-serine is bound at residue Glu280. 344 to 347 (ELTS) contributes to the ATP binding site. Thr379 serves as a coordination point for L-serine.

The protein belongs to the class-II aminoacyl-tRNA synthetase family. Type-1 seryl-tRNA synthetase subfamily. In terms of assembly, homodimer. The tRNA molecule binds across the dimer.

It localises to the cytoplasm. The enzyme catalyses tRNA(Ser) + L-serine + ATP = L-seryl-tRNA(Ser) + AMP + diphosphate + H(+). The catalysed reaction is tRNA(Sec) + L-serine + ATP = L-seryl-tRNA(Sec) + AMP + diphosphate + H(+). Its pathway is aminoacyl-tRNA biosynthesis; selenocysteinyl-tRNA(Sec) biosynthesis; L-seryl-tRNA(Sec) from L-serine and tRNA(Sec): step 1/1. Catalyzes the attachment of serine to tRNA(Ser). Is also able to aminoacylate tRNA(Sec) with serine, to form the misacylated tRNA L-seryl-tRNA(Sec), which will be further converted into selenocysteinyl-tRNA(Sec). The polypeptide is Serine--tRNA ligase (Mycobacterium ulcerans (strain Agy99)).